We begin with the raw amino-acid sequence, 85 residues long: Large ribosomal subunit protein bL31B (85 aa).

It belongs to the bacterial ribosomal protein bL31 family. Type B subfamily. As to quaternary structure, part of the 50S ribosomal subunit.

This chain is Large ribosomal subunit protein bL31B, found in Stutzerimonas stutzeri (strain A1501) (Pseudomonas stutzeri).